The following is a 4042-amino-acid chain: Polyketide synthase-nonribosomal peptide synthetase phmA (4042 aa).

The Ketosynthase family 3 (KS3) domain maps to 10 to 411 (NEPIAIVGSA…GANAHAILEA (402 aa)). The acyl transferase stretch occupies residues 519–837 (VFTGQGAQWA…TGLLSRDRDD (319 aa)). Positions 909–1042 (HELLGTKCPD…GRISALFGPP (134 aa)) are N-terminal hotdog fold. The segment at 909–1208 (HELLGTKCPD…LHTKPLGHAT (300 aa)) is dehydratase (DH) domain. The PKS/mFAS DH domain maps to 909-1210 (HELLGTKCPD…TKPLGHATPE (302 aa)). H941 acts as the Proton acceptor; for dehydratase activity in catalysis. The tract at residues 1057–1210 (MIDVDPEQFY…TKPLGHATPE (154 aa)) is C-terminal hotdog fold. The active-site Proton donor; for dehydratase activity is D1117. Positions 1349-1572 (DDMLNDFYVK…VDEHVEFIRN (224 aa)) are methyltransferase (MT) domain. A ketoreductase (KR)domain region spans residues 2073 to 2246 (TYWLVGLTGG…AGSVINIGAI (174 aa)). A Carrier 1 domain is found at 2351–2433 (ATTADEVNEA…ELVSAAQEQL (83 aa)). S2393 bears the O-(pantetheine 4'-phosphoryl)serine mark. Disordered stretches follow at residues 2460-2504 (KTET…SKDA) and 2535-2554 (ATRS…PEND). Positions 2479 to 2490 (EVDEEEQEEDEA) are enriched in acidic residues. Over residues 2495 to 2504 (NFFSSASKDA) the composition is skewed to polar residues. The span at 2536–2549 (TRSKTSSSSSSFTS) shows a compositional bias: low complexity. The interval 2584 to 3019 (RVSPMSFGQA…LGRPPLYDPQ (436 aa)) is condensation. Residues 3047 to 3443 (EMASRFGSQI…TADGLVLEGR (397 aa)) are adenylation. Positions 3562-3642 (KENKSPESEL…AMLNLISPAS (81 aa)) constitute a Carrier 2 domain. S3602 carries the post-translational modification O-(pantetheine 4'-phosphoryl)serine. The tract at residues 3703–3924 (ITGASGFLGK…DFVSVESVAH (222 aa)) is reductase-like.

The protein belongs to the NRP synthetase family.

It functions in the pathway mycotoxin biosynthesis. Hybrid PKS-NRPS synthetase; part of the gene cluster that mediates the biosynthesis of the mycotoxins phomacins, leucine-derived cytochalasans with potent actin polymerization-inhibitory activities and monocot-specific antigerminative activities. The first step in the pathway is catalyzed by the hybrid PKS-NRPS phmA, assisted by the enoyl reductase phmE, that are responsible for fusion of the leucine precursor and the polyketide backbone to produce a 2-pyrrolidone intermediate. The polyketide synthase module (PKS) of phmA is responsible for the synthesis of the polyketide backbone and the downstream nonribosomal peptide synthetase (NRPS) amidates the carboxyl end of the polyketide with the leucine precursor. Because phmA lacks a designated enoylreductase (ER) domain, the required activity is provided the enoyl reductase phmE. Reduction by the hydrolyase phmG, followed by dehydration and intra-molecular Diels-Alder cyclization by the Diels-Alderase phmD then yield the required isoindolone-fused macrocycle. A number of oxidative steps catalyzed by the tailoring cytochrome P450 monooxygenase phmB, the FAD-linked oxidoreductase phmC and the short-chain dehydrogenase/reductase phmF, are further required to afford the final products, phomacin D and phomacin E. The sequence is that of Polyketide synthase-nonribosomal peptide synthetase phmA from Phaeosphaeria nodorum (strain SN15 / ATCC MYA-4574 / FGSC 10173) (Glume blotch fungus).